A 3391-amino-acid chain; its full sequence is Genome polyprotein (3391 aa).

The tract at residues 1–15 (MNNQRKKTARPSFNM) is interaction with host EXOC1. Topologically, residues 1-101 (MNNQRKKTAR…LNIMNRRKRS (101 aa)) are cytoplasmic. The tract at residues 37-72 (LLSGQGPMKLVMAFIAFLRFLAIPPTAGILARWGSF) is hydrophobic; homodimerization of capsid protein C. Residues 101 to 114 (SVTMLLMLLPTALA) constitute a propeptide, ER anchor for the capsid protein C, removed in mature form by serine protease NS3. A helical membrane pass occupies residues 102–119 (VTMLLMLLPTALAFHLTT). Topologically, residues 120–242 (RGGEPHMIVS…QIQRVETWAL (123 aa)) are extracellular. Residue asparagine 183 is glycosylated (N-linked (GlcNAc...) asparagine; by host). The chain crosses the membrane as a helical span at residues 243–260 (RHPGFTVIALFLAHAIGT). A topological domain (cytoplasmic) is located at residue serine 261. The chain crosses the membrane as a helical span at residues 262–280 (ITQKGIIFILLMLVTPSMA). Over 281 to 725 (MRCVGIGSRD…HQVFGTAYGV (445 aa)) the chain is Extracellular. 4 cysteine pairs are disulfide-bonded: cysteine 283–cysteine 310, cysteine 340–cysteine 401, cysteine 354–cysteine 385, and cysteine 372–cysteine 396. Asparagine 347 carries an N-linked (GlcNAc...) asparagine; by host glycan. Positions 378-391 (DRGWGNGCGLFGKG) are fusion peptide. N-linked (GlcNAc...) asparagine; by host glycosylation occurs at asparagine 433. 2 cysteine pairs are disulfide-bonded: cysteine 465-cysteine 565 and cysteine 582-cysteine 613. The helical transmembrane segment at 726 to 746 (LFSGVSWTMKIGIGILLTWLG) threads the bilayer. Residues 747–752 (LNSRST) lie on the Cytoplasmic side of the membrane. A helical transmembrane segment spans residues 753–773 (SLSMTCIAVGMVTLYLGVMVQ). Residues 774–1198 (ADSGCVINWK…NASDRMGMGT (425 aa)) are Extracellular-facing. 6 disulfide bridges follow: cysteine 778–cysteine 789, cysteine 829–cysteine 917, cysteine 953–cysteine 997, cysteine 1054–cysteine 1103, cysteine 1065–cysteine 1087, and cysteine 1086–cysteine 1090. Asparagine 904 and asparagine 981 each carry an N-linked (GlcNAc...) asparagine; by host glycan. N-linked (GlcNAc...) asparagine; by host glycosylation is present at asparagine 1189. A helical membrane pass occupies residues 1199 to 1219 (TYLALMATFKMRPMFAVGLLF). Residues 1220-1225 (RRLTSR) lie on the Cytoplasmic side of the membrane. The helical transmembrane segment at 1226-1244 (EVLLLTIGLSLVASVELPN) threads the bilayer. Over 1245–1268 (SLEELGDGLAMGIMILKLLTDFQS) the chain is Lumenal. Residues 1269 to 1289 (HQLWATLLSLTFVKTTFSLHY) form a helical membrane-spanning segment. Residue alanine 1290 is a topological domain, cytoplasmic. The chain crosses the membrane as a helical span at residues 1291-1309 (WKTMAMVLSIVSLFPLCLS). The Lumenal portion of the chain corresponds to 1310-1314 (TTSQK). The helical transmembrane segment at 1315-1335 (TTWLPVLLGSLGCKPLTMFLI) threads the bilayer. Over 1336-1345 (AENKIWGRKS) the chain is Cytoplasmic. Residues 1346–1366 (WPLNEGIMAVGIVSILLSSLL) traverse the membrane as a helical segment. Residues 1367 to 1369 (KND) lie on the Lumenal side of the membrane. The chain crosses the membrane as a helical span at residues 1370-1390 (VPLAGPLIAGGMLIACYVISG). At 1391–1446 (SSADLSLEKAAEVSWEEEAEHSGASHNILVEVQDDGTMKIKDEERDDTLTILLKAT) the chain is on the cytoplasmic side. The interacts with and activates NS3 protease stretch occupies residues 1397–1436 (LEKAAEVSWEEEAEHSGASHNILVEVQDDGTMKIKDEERD). An intramembrane region (helical) is located at residues 1447-1467 (LLAVSGVYPLSIPATLFVWYF). At 1468 to 2147 (WQKKKQRSGV…MEELPDTIET (680 aa)) the chain is on the cytoplasmic side. Residues 1475-1652 (SGVLWDTPSP…KASQEGPLPE (178 aa)) form the Peptidase S7 domain. Residues histidine 1525, aspartate 1549, and serine 1609 each act as charge relay system; for serine protease NS3 activity in the active site. One can recognise a Helicase ATP-binding domain in the interval 1655 to 1811 (DEVFRKRNLT…QSNAVIQDEE (157 aa)). The important for RNA-binding stretch occupies residues 1659–1662 (RKRN). 1668-1675 (LHPGSGKT) is an ATP binding site. The DEAH box signature appears at 1759-1762 (DEAH). One can recognise a Helicase C-terminal domain in the interval 1821–1988 (SGYEWITDFP…IIPALFEPER (168 aa)). Lysine 1863 is subject to N6-acetyllysine; by host. Residues 2148 to 2168 (LMLLALIAVLTGGVTLFFLSG) traverse the membrane as a helical segment. Over 2169–2170 (KG) the chain is Lumenal. Positions 2171–2191 (LGKTSIGLLCVMASSVLLWMA) form an intramembrane region, helical. Residue serine 2192 is a topological domain, lumenal. The chain crosses the membrane as a helical span at residues 2193 to 2213 (VEPHWIAASIILEFFLMVLLI). Residues 2214-2228 (PEPDRQRTPQDNQLA) lie on the Cytoplasmic side of the membrane. The helical transmembrane segment at 2229–2249 (YVVIGLLFMILTVAANEMGLL) threads the bilayer. At 2250 to 2275 (ETTKKDLGIGHVAAENHHHATMLDVD) the chain is on the lumenal side. The segment at residues 2276-2296 (LRPASAWTLYAVATTVITPMM) is an intramembrane region (helical). Residues 2297 to 2348 (RHTIENTTANISLTAIANQAAILMGLDKGWPISKMDIGVPLLALGCYSQVNP) are Lumenal-facing. N-linked (GlcNAc...) asparagine; by host glycosylation is found at asparagine 2302 and asparagine 2306. A helical transmembrane segment spans residues 2349–2369 (LTLTAAVLMLVAHYAIIGPGL). Residues 2370–2414 (QAKATREAQKRTAAGIMKNPTVDGIVAIDLDPVVYDAKFEKQLGQ) lie on the Cytoplasmic side of the membrane. Residues 2415-2435 (IMLLILCTSQILLMRTTWALC) form a helical membrane-spanning segment. The Lumenal portion of the chain corresponds to 2436-2460 (ESITLATGPLTTLWEGSPGKFWNTT). The N-linked (GlcNAc...) asparagine; by host glycan is linked to asparagine 2458. Residues 2461–2481 (IAVSMANIFRGSYLAGAGLAF) form a helical membrane-spanning segment. The Cytoplasmic portion of the chain corresponds to 2482 to 3391 (SLMKSLGGGR…NESDPEGALW (910 aa)). Positions 2494–2755 (TGAKGKHWER…DVDLGAGTRH (262 aa)) constitute an mRNA cap 0-1 NS5-type MT domain. Serine 2548 contributes to the S-adenosyl-L-methionine binding site. Serine 2548 bears the Phosphoserine mark. Lysine 2553 acts as the For 2'-O-MTase activity in catalysis. Residues 2569–2572 (VIDL) carry the SUMO-interacting motif motif. S-adenosyl-L-methionine contacts are provided by glycine 2578, tryptophan 2579, threonine 2596, lysine 2597, aspartate 2623, and valine 2624. Aspartate 2638 acts as the For 2'-O-MTase activity in catalysis. Isoleucine 2639 is an S-adenosyl-L-methionine binding site. Residues lysine 2672 and glutamate 2708 each act as for 2'-O-MTase activity in the active site. Residue tyrosine 2710 coordinates S-adenosyl-L-methionine. Residues glutamate 2929, histidine 2933, cysteine 2938, and cysteine 2941 each coordinate Zn(2+). One can recognise a RdRp catalytic domain in the interval 3019 to 3168 (GNMYADDTAG…KPIDDRFATA (150 aa)). Zn(2+)-binding residues include histidine 3203, cysteine 3219, and cysteine 3338.

This sequence in the N-terminal section; belongs to the class I-like SAM-binding methyltransferase superfamily. mRNA cap 0-1 NS5-type methyltransferase family. Homodimer. Interacts (via N-terminus) with host EXOC1 (via C-terminus); this interaction results in EXOC1 degradation through the proteasome degradation pathway. As to quaternary structure, forms heterodimers with envelope protein E in the endoplasmic reticulum and Golgi. In terms of assembly, homodimer; in the endoplasmic reticulum and Golgi. Interacts with protein prM. Interacts with non-structural protein 1. Homodimer; Homohexamer when secreted. Interacts with envelope protein E. As to quaternary structure, interacts (via N-terminus) with serine protease NS3. In terms of assembly, forms a heterodimer with serine protease NS3. May form homooligomers. Forms a heterodimer with NS2B. Interacts with NS4B. Interacts with unphosphorylated RNA-directed RNA polymerase NS5; this interaction stimulates RNA-directed RNA polymerase NS5 guanylyltransferase activity. Interacts with host SHFL. As to quaternary structure, interacts with host MAVS; this interaction inhibits the synthesis of IFN-beta. Interacts with host SHFL. Interacts with host AUP1; the interaction occurs in the presence of Dengue virus NS4B and induces lipophagy which facilitates production of virus progeny particles. In terms of assembly, interacts with serine protease NS3. Homodimer. Interacts with host STAT2; this interaction inhibits the phosphorylation of the latter, and, when all viral proteins are present (polyprotein), targets STAT2 for degradation. Interacts with serine protease NS3. Specific enzymatic cleavages in vivo yield mature proteins. Cleavages in the lumen of endoplasmic reticulum are performed by host signal peptidase, whereas cleavages in the cytoplasmic side are performed by serine protease NS3. Signal cleavage at the 2K-4B site requires a prior NS3 protease-mediated cleavage at the 4A-2K site. Post-translationally, cleaved in post-Golgi vesicles by a host furin, releasing the mature small envelope protein M, and peptide pr. This cleavage is incomplete as up to 30% of viral particles still carry uncleaved prM. In terms of processing, N-glycosylated. N-glycosylated. The excreted form is glycosylated and this is required for efficient secretion of the protein from infected cells. Post-translationally, acetylated by host KAT5. Acetylation modulates NS3 RNA-binding and unwinding activities and plays an important positive role for viral replication. In terms of processing, sumoylation of RNA-directed RNA polymerase NS5 increases NS5 protein stability allowing proper viral RNA replication. Phosphorylated on serines residues. This phosphorylation may trigger NS5 nuclear localization.

It is found in the virion. It localises to the host nucleus. Its subcellular location is the host cytoplasm. The protein resides in the host perinuclear region. The protein localises to the secreted. It is found in the virion membrane. It localises to the host endoplasmic reticulum membrane. Its subcellular location is the host mitochondrion. It catalyses the reaction Selective hydrolysis of -Xaa-Xaa-|-Yaa- bonds in which each of the Xaa can be either Arg or Lys and Yaa can be either Ser or Ala.. The catalysed reaction is RNA(n) + a ribonucleoside 5'-triphosphate = RNA(n+1) + diphosphate. It carries out the reaction a ribonucleoside 5'-triphosphate + H2O = a ribonucleoside 5'-diphosphate + phosphate + H(+). The enzyme catalyses ATP + H2O = ADP + phosphate + H(+). It catalyses the reaction a 5'-end (5'-triphosphoguanosine)-ribonucleoside in mRNA + S-adenosyl-L-methionine = a 5'-end (N(7)-methyl 5'-triphosphoguanosine)-ribonucleoside in mRNA + S-adenosyl-L-homocysteine. The catalysed reaction is a 5'-end (N(7)-methyl 5'-triphosphoguanosine)-ribonucleoside in mRNA + S-adenosyl-L-methionine = a 5'-end (N(7)-methyl 5'-triphosphoguanosine)-(2'-O-methyl-ribonucleoside) in mRNA + S-adenosyl-L-homocysteine + H(+). In terms of biological role, plays a role in virus budding by binding to the cell membrane and gathering the viral RNA into a nucleocapsid that forms the core of a mature virus particle. During virus entry, may induce genome penetration into the host cytoplasm after hemifusion induced by the surface proteins. Can migrate to the cell nucleus where it modulates host functions. Overcomes the anti-viral effects of host EXOC1 by sequestering and degrading the latter through the proteasome degradation pathway. Inhibits RNA silencing by interfering with host Dicer. Functionally, prevents premature fusion activity of envelope proteins in trans-Golgi by binding to envelope protein E at pH6.0. After virion release in extracellular space, gets dissociated from E dimers. Its function is as follows. Acts as a chaperone for envelope protein E during intracellular virion assembly by masking and inactivating envelope protein E fusion peptide. prM is the only viral peptide matured by host furin in the trans-Golgi network probably to avoid catastrophic activation of the viral fusion activity in acidic Golgi compartment prior to virion release. prM-E cleavage is inefficient, and many virions are only partially matured. These uncleaved prM would play a role in immune evasion. In terms of biological role, may play a role in virus budding. Exerts cytotoxic effects by activating a mitochondrial apoptotic pathway through M ectodomain. May display a viroporin activity. Binds to host cell surface receptor and mediates fusion between viral and cellular membranes. Envelope protein is synthesized in the endoplasmic reticulum in the form of heterodimer with protein prM. They play a role in virion budding in the ER, and the newly formed immature particle is covered with 60 spikes composed of heterodimer between precursor prM and envelope protein E. The virion is transported to the Golgi apparatus where the low pH causes dissociation of PrM-E heterodimers and formation of E homodimers. prM-E cleavage is inefficient, and many virions are only partially matured. These uncleaved prM would play a role in immune evasion. Functionally, involved in immune evasion, pathogenesis and viral replication. Once cleaved off the polyprotein, is targeted to three destinations: the viral replication cycle, the plasma membrane and the extracellular compartment. Essential for viral replication. Required for formation of the replication complex and recruitment of other non-structural proteins to the ER-derived membrane structures. Excreted as a hexameric lipoparticle that plays a role against host immune response. Antagonizing the complement function. Binds to the host macrophages and dendritic cells. Inhibits signal transduction originating from Toll-like receptor 3 (TLR3). Its function is as follows. Disrupts the host endothelial glycocalyx layer of host pulmonary microvascular endothelial cells, inducing degradation of sialic acid and shedding of heparan sulfate proteoglycans. NS1 induces expression of sialidases, heparanase, and activates cathepsin L, which activates heparanase via enzymatic cleavage. These effects are probably linked to the endothelial hyperpermeability observed in severe dengue disease. In terms of biological role, component of the viral RNA replication complex that functions in virion assembly and antagonizes the host immune response. Required cofactor for the serine protease function of NS3. May have membrane-destabilizing activity and form viroporins. Functionally, displays three enzymatic activities: serine protease, NTPase and RNA c. NS3 serine protease, in association with NS2B, performs its autocleavage and cleaves the polyprotein at dibasic sites in the cytoplasm: C-prM, NS2A-NS2B, NS2B-NS3, NS3-NS4A, NS4A-2K and NS4B-NS5. NS3 RNA helicase binds RNA and unwinds dsRNA in the 3' to 5' direction. Its function is as follows. Regulates the ATPase activity of the NS3 helicase activity. NS4A allows NS3 helicase to conserve energy during unwinding. Plays a role in the inhibition of the host innate immune response. Interacts with host MAVS and thereby prevents the interaction between RIGI and MAVS. In turn, IFN-beta production is impaired. Interacts with host AUP1 which mediates induction of lipophagy in host cells and facilitates production of virus progeny particles. In terms of biological role, functions as a signal peptide for NS4B and is required for the interferon antagonism activity of the latter. Induces the formation of ER-derived membrane vesicles where the viral replication takes place. Inhibits interferon (IFN)-induced host STAT1 phosphorylation and nuclear translocation, thereby preventing the establishment of cellular antiviral state by blocking the IFN-alpha/beta pathway. Functionally, replicates the viral (+) and (-) RNA genome, and performs the capping of genomes in the cytoplasm. NS5 methylates viral RNA cap at guanine N-7 and ribose 2'-O positions. Besides its role in RNA genome replication, also prevents the establishment of cellular antiviral state by blocking the interferon-alpha/beta (IFN-alpha/beta) signaling pathway. Inhibits host TYK2 and STAT2 phosphorylation, thereby preventing activation of JAK-STAT signaling pathway. This is Genome polyprotein from Aedes aegypti (Yellowfever mosquito).